A 210-amino-acid chain; its full sequence is Acetoin utilization protein AcuA (210 aa).

In terms of domain architecture, N-acetyltransferase spans 19-189; sequence VLIEGPISPE…ANCLMARIGK (171 aa).

This sequence belongs to the acetyltransferase family. Monomer.

Its pathway is ketone degradation; acetoin degradation. In terms of biological role, part of the acuABC operon, which is possibly involved in the breakdown of acetoin and butanediol. Acts as an acetyltransferase inactivating acetyl-CoA synthetase AcsA via acetylation at a Lys residue. In Bacillus licheniformis (strain ATCC 14580 / DSM 13 / JCM 2505 / CCUG 7422 / NBRC 12200 / NCIMB 9375 / NCTC 10341 / NRRL NRS-1264 / Gibson 46), this protein is Acetoin utilization protein AcuA.